Reading from the N-terminus, the 301-residue chain is Rhodopsin (301 aa).

Residues 1–18 lie on the Extracellular side of the membrane; that stretch reads LHMIHLHWYQYPPMNPMM. The chain crosses the membrane as a helical span at residues 19 to 43; that stretch reads YPLLLVFMLITGILCLAGNFVTIWV. At 44–55 the chain is on the cytoplasmic side; the sequence is FMNTKSLRTPAN. Residues 56–78 form a helical membrane-spanning segment; sequence LLVVNLAMSDFLMMFTMFPPMMI. At 79–92 the chain is on the extracellular side; that stretch reads TCYYHTWTLGATFC. Cys92 and Cys169 are joined by a disulfide. Residues 93 to 115 form a helical membrane-spanning segment; the sequence is EVYAFLGNLCGCASIWTMVFITF. A 'Ionic lock' involved in activated form stabilization motif is present at residues 116 to 118; sequence DRY. The Cytoplasmic portion of the chain corresponds to 116-134; sequence DRYNVIVKGVAGEPLSTKK. Residues 135–155 traverse the membrane as a helical segment; the sequence is ASLWILTVWVLSFTWCVAPFF. Residues 156 to 182 are Extracellular-facing; the sequence is GWNRYVPEGNLTGCGTDYLSEDILSRS. N-linked (GlcNAc...) asparagine glycosylation occurs at Asn165. Residues 183 to 204 form a helical membrane-spanning segment; that stretch reads YLYIYSTWVYFLPLAITIYCYV. Topologically, residues 205–245 are cytoplasmic; that stretch reads FIIKAVAAHEKGMRDQAKKMGIKSLRNEEAQKTSAECRLAK. A helical transmembrane segment spans residues 246-267; sequence IAMTTVALWFIAWTPYLLINWV. Topologically, residues 268–278 are extracellular; that stretch reads GMFARSYLSPV. A helical membrane pass occupies residues 279 to 300; that stretch reads YTIWGYVFAKANAVYNPIVYAI. Lys288 carries the N6-(retinylidene)lysine modification.

The protein belongs to the G-protein coupled receptor 1 family. Opsin subfamily. Homodimer. Interacts with GNAQ. Contains one covalently linked retinal chromophore.

The protein resides in the cell projection. It is found in the rhabdomere membrane. In terms of biological role, photoreceptor required for image-forming vision at low light intensity. Can use both retinal and 3-dehydroretinal as visual pigment. Light-induced isomerization of 11-cis to all-trans retinal triggers a conformational change that activates signaling via G-proteins. Signaling via GNAQ probably mediates the activation of phospholipase C. The protein is Rhodopsin (RHO) of Lacunicambarus ludovicianus (Painted devil crayfish).